The primary structure comprises 931 residues: MIMDKTYQPDRIEQSWYENWEQAGHFKPSGQGDPFCIMIPPPNVTGSLHMGHAFQDTIMDTLVRYRRMQGRNTLWQVGTDHAGIATQMVVERKLAGEGTNRHELGREKFLDKVWEWKRESGGTITRQLRRMGASVDWTRERFTMDDGLSNAVREVFVRLHKEGLIYRGKRLVNWDPALHTAISDLEVENVEEQGHMWHFRYPLSDGSGHLVVATTRPETMLGDTAVAVHPQDPRYKDMIGKSIRLPLADRNIPIIADDYVDPDFGSGCVKITPAHDFNDYEVGKRHDLPMINILTIDAALNDEVPEGYRGLDRVEARKKVVDDLDALGLLEKVDDHTLQVPRGDRSGVVIEPYLTDQWFVAVEELAKPAIAAVENGDIQFVPKNYENMYFSWMRDLQDWCISRQLWWGHRIPAWYDADGNVYVGRDEEEVRAENNLGDTPLSQDDDVLDTWFSSALWTFSTLGWPDDTDALRTFHPTDVLVTGFDIIFFWVARMIMMTLKFTDQVPFKKVYVHGLVRDNDGQKMSKSKGNVLDPLDMIDGITLDALIDKRTKGLMQPQKEKQITKRTNKDFPDGINPYGTDALRFTFLSLASTGRDIKWDMGRIEGYRNFCNKIWNAARYVMMNTEGEDCGIDTDSEVELSLADRWIISALQRAELEVSEALDSFRFDVASHAAYEFIWNEYCDWYLELSKPVLWGDEYSDAQKRGTRRTLVTVLEAILRMAHPFMPFITEEIWQKVGPLAGKASAAGKGEKTDTIMLQPFPASEPAKIDTNAETGAEWVKAVISAVRNIRGEMGIPLGKALPIYLHNGKDSDKALLDANRVFLCKLAKLESITWLTAEDSAPASATALVGDMEILVPMAGLIDKEAEIERLSKEIEKLRKEVGRAEGKLKNPKFVDKAPQAVVDKEKAKLDDYRSQLAKLEEQLEKIKYL.

Positions 42 to 52 (PNVTGSLHMGH) match the 'HIGH' region motif. Residues 523 to 527 (KMSKS) carry the 'KMSKS' region motif. Residue Lys526 coordinates ATP. The stretch at 859–931 (MAGLIDKEAE…EEQLEKIKYL (73 aa)) forms a coiled coil.

This sequence belongs to the class-I aminoacyl-tRNA synthetase family. ValS type 1 subfamily. As to quaternary structure, monomer.

It is found in the cytoplasm. The catalysed reaction is tRNA(Val) + L-valine + ATP = L-valyl-tRNA(Val) + AMP + diphosphate. Its function is as follows. Catalyzes the attachment of valine to tRNA(Val). As ValRS can inadvertently accommodate and process structurally similar amino acids such as threonine, to avoid such errors, it has a 'posttransfer' editing activity that hydrolyzes mischarged Thr-tRNA(Val) in a tRNA-dependent manner. The polypeptide is Valine--tRNA ligase (Alcanivorax borkumensis (strain ATCC 700651 / DSM 11573 / NCIMB 13689 / SK2)).